Consider the following 1150-residue polypeptide: Solute carrier family 12 member 6 (1150 aa).

Residues 1–135 are Cytoplasmic-facing; it reads MHPPETTTKM…DEYFDKNLAL (135 aa). The segment at 20-66 is disordered; the sequence is TKIDDIPGLSDTSPDLSSRSSSRVRFSSRESVPETSRSEPMSEMSGA. The span at 28–45 shows a compositional bias: low complexity; it reads LSDTSPDLSSRSSSRVRF. Ser32 and Ser120 each carry phosphoserine. A discontinuously helical transmembrane segment spans residues 136–158; the sequence is FEEEMDTRPKVSSLLNRMANYTN. K(+) contacts are provided by Ser147 and Ser148. Ser148 is modified (phosphoserine). A chloride-binding site is contributed by Asn151. Over 159–165 the chain is Extracellular; it reads LTQGAKE. The disordered stretch occupies residues 161 to 181; that stretch reads QGAKEHEEAENITEGKKKPTK. Over residues 163 to 177 the composition is skewed to basic and acidic residues; it reads AKEHEEAENITEGKK. Residues 166 to 188 traverse the membrane as a helical segment; sequence HEEAENITEGKKKPTKTPQMGTF. The Cytoplasmic segment spans residues 189–211; that stretch reads MGVYLPCLQNIFGVILFLRLTWV. Residues 212–245 form a helical membrane-spanning segment; the sequence is VGTAGVLQAFAIVLICCCCTMLTAISMSAIATNG. The Extracellular portion of the chain corresponds to 246–263; that stretch reads VVPAGGSYFMISRALGPE. A run of 2 helical transmembrane segments spans residues 264-287 and 288-316; these read FGGA…ILGA and IEIF…AMLN. Residues 317–433 lie on the Extracellular side of the membrane; that stretch reads NMRVYGTAFL…FVHNNVTSIQ (117 aa). Cys375 and Cys390 form a disulfide bridge. N-linked (GlcNAc...) asparagine glycans are attached at residues Asn379, Asn398, Asn411, and Asn428. Cys410 and Cys420 are joined by a disulfide. The helical transmembrane segment at 434 to 454 threads the bilayer; that stretch reads GIPGLASGIITENLWSNYLPK. K(+)-binding residues include Ile443, Thr444, and Asn446. Chloride is bound by residues Ile443 and Thr444. Leu447 and Trp448 together coordinate chloride. At 455 to 464 the chain is on the cytoplasmic side; the sequence is GEIIEKPSAK. A helical membrane pass occupies residues 465-487; that stretch reads SSDVLGSLNHEYVLVDITTSFTL. Residues 488-518 lie on the Extracellular side of the membrane; the sequence is LVGIFFPSVTGIMAGSNRSGDLKDAQKSIPI. The helical transmembrane segment at 519 to 545 threads the bilayer; it reads GTILAILTTSFVYLSNVVLFGACIEGV. Residues 546 to 568 are Cytoplasmic-facing; it reads VLRDKFGDAVKGNLVVGTLSWPS. The next 2 membrane-spanning stretches (helical) occupy residues 569 to 589 and 590 to 612; these read PWVI…QSLT and GAPR…VFGH. Ile603 contacts chloride. At 613 to 629 the chain is on the cytoplasmic side; that stretch reads SKANGEPTWALLLTAAI. A run of 2 helical transmembrane segments spans residues 630-649 and 650-665; these read AELG…LSMF and FLMC…ALQT. The Cytoplasmic segment spans residues 666 to 1150; sequence LLRTPNWRPR…GGSEVITIYS (485 aa). The segment at 682–691 is scissor helix; that stretch reads ALSFMGMSIC. Ser736 carries the post-translational modification Phosphoserine. Thr778 bears the Phosphothreonine mark. The residue at position 981 (Ser981) is a Phosphoserine. Phosphothreonine; by OXSR1 and STK39 is present on Thr991. Phosphoserine is present on residues Ser1023, Ser1029, and Ser1032. Thr1048 carries the phosphothreonine; by OXSR1 and STK39 modification. Position 1121 is a phosphotyrosine (Tyr1121). The tract at residues 1133-1150 is interaction with CKB; that stretch reads ERVLLVRGGGSEVITIYS.

The protein belongs to the SLC12A transporter family. K/Cl co-transporter subfamily. In terms of assembly, homodimer; adopts a domain-swap conformation at the scissor helices connecting the transmembrane domain and C-terminal domain. Heterodimer with K-Cl cotransporter SLC12A5. Interacts (via C-terminus) with CKB; the interaction may be required for potassium-chloride cotransport activity. Post-translationally, phosphorylated, phosphorylation regulates transporter activity. Phosphorylated at Thr-991 and Thr-1048 by OXSR1/OSR1 and STK39/SPAK downstream of WNK kinases (WNK1, WNK2, WNK3 or WNK4), inhibiting the potassium-chloride cotransport activity. N-glycosylated. As to expression, expressed in brain (at protein level). Highly expressed in heart, brain and kidney. Detected at lower levels in skeletal muscle, placenta, lung and pancreas. Detected in umbilical vein endothelial cells. More abundant in kidney. In terms of tissue distribution, testis specific.

Its subcellular location is the cell membrane. The protein localises to the basolateral cell membrane. The catalysed reaction is K(+)(in) + chloride(in) = K(+)(out) + chloride(out). With respect to regulation, inhibited following phosphorylation by OXSR1/OSR1 and STK39/SPAK: phosphorylation takes place downstream of WNK kinases (WNK1, WNK2, WNK3 or WNK4) in response to hyperosmotic stress and subsequent cell shrinkage. Activated by N-ethylmaleimide (NEM). Inhibited by DIOA, bumetanide and furosemide. In terms of biological role, mediates electroneutral potassium-chloride cotransport when activated by cell swelling. May contribute to cell volume homeostasis in single cells. Its function is as follows. Mediates electroneutral potassium-chloride cotransport when activated by cell swelling. May contribute to cell volume homeostasis in single cells. Functionally, mediates electroneutral potassium-chloride cotransport when activated by cell swelling. May contribute to cell volume homeostasis in single cells. The polypeptide is Solute carrier family 12 member 6 (Homo sapiens (Human)).